Reading from the N-terminus, the 381-residue chain is Queuine tRNA-ribosyltransferase (381 aa).

Asp-92 acts as the Proton acceptor in catalysis. Substrate contacts are provided by residues 92–96 (DSGGF), Asp-146, Gln-190, and Gly-217. Residues 248–254 (GVGRPED) form an RNA binding region. Asp-267 functions as the Nucleophile in the catalytic mechanism. Residues 272–276 (TRNAR) are RNA binding; important for wobble base 34 recognition. The Zn(2+) site is built by Cys-305, Cys-307, Cys-310, and His-337.

The protein belongs to the queuine tRNA-ribosyltransferase family. As to quaternary structure, homodimer. Within each dimer, one monomer is responsible for RNA recognition and catalysis, while the other monomer binds to the replacement base PreQ1. It depends on Zn(2+) as a cofactor.

The enzyme catalyses 7-aminomethyl-7-carbaguanine + guanosine(34) in tRNA = 7-aminomethyl-7-carbaguanosine(34) in tRNA + guanine. It functions in the pathway tRNA modification; tRNA-queuosine biosynthesis. Functionally, catalyzes the base-exchange of a guanine (G) residue with the queuine precursor 7-aminomethyl-7-deazaguanine (PreQ1) at position 34 (anticodon wobble position) in tRNAs with GU(N) anticodons (tRNA-Asp, -Asn, -His and -Tyr). Catalysis occurs through a double-displacement mechanism. The nucleophile active site attacks the C1' of nucleotide 34 to detach the guanine base from the RNA, forming a covalent enzyme-RNA intermediate. The proton acceptor active site deprotonates the incoming PreQ1, allowing a nucleophilic attack on the C1' of the ribose to form the product. After dissociation, two additional enzymatic reactions on the tRNA convert PreQ1 to queuine (Q), resulting in the hypermodified nucleoside queuosine (7-(((4,5-cis-dihydroxy-2-cyclopenten-1-yl)amino)methyl)-7-deazaguanosine). In Xanthomonas campestris pv. campestris (strain B100), this protein is Queuine tRNA-ribosyltransferase.